A 368-amino-acid chain; its full sequence is Branched-chain-amino-acid aminotransferase (368 aa).

Pyridoxal 5'-phosphate is bound at residue Arg101. Position 204 is an N6-(pyridoxal phosphate)lysine (Lys204). Residues Tyr209, 271-272 (IT), and Thr314 each bind pyridoxal 5'-phosphate.

The protein belongs to the class-IV pyridoxal-phosphate-dependent aminotransferase family. Homodimer. It depends on pyridoxal 5'-phosphate as a cofactor.

It carries out the reaction L-leucine + 2-oxoglutarate = 4-methyl-2-oxopentanoate + L-glutamate. The catalysed reaction is L-isoleucine + 2-oxoglutarate = (S)-3-methyl-2-oxopentanoate + L-glutamate. The enzyme catalyses L-valine + 2-oxoglutarate = 3-methyl-2-oxobutanoate + L-glutamate. Its pathway is amino-acid biosynthesis; L-isoleucine biosynthesis; L-isoleucine from 2-oxobutanoate: step 4/4. It participates in amino-acid biosynthesis; L-leucine biosynthesis; L-leucine from 3-methyl-2-oxobutanoate: step 4/4. The protein operates within amino-acid biosynthesis; L-valine biosynthesis; L-valine from pyruvate: step 4/4. Its function is as follows. Catalyzes the reversible transfers of an amino group from glutamate to the alpha-ketoacid of the respective amino acid in the final step in the biosynthesis of branchedchain amino acids. This is Branched-chain-amino-acid aminotransferase (ilvE) from Mycobacterium tuberculosis (strain CDC 1551 / Oshkosh).